Reading from the N-terminus, the 147-residue chain is Membrane-spanning 4-domains subfamily A member 6E (147 aa).

Residues 1–52 (MTSQPISNETIIMLPSNVINFSQAEKPEPTNQGQDSLKKRLQAKVKVIGVHS) are Cytoplasmic-facing. A helical transmembrane segment spans residues 53–73 (SLAGSILSALSALVGFILLSV). Topologically, residues 74-120 (NPAALNPASLQCKLDEKDIPTRLLLSYDYHSPYTMDCHRAKASLAGT) are extracellular. A helical transmembrane segment spans residues 121–141 (LSLMLVSTVLEFCLAVLTAVL). The Cytoplasmic segment spans residues 142–147 (QWKQTV).

The protein belongs to the MS4A family. Expressed by malignant and fetal tissue at very low levels.

It localises to the membrane. May be involved in signal transduction as a component of a multimeric receptor complex. The chain is Membrane-spanning 4-domains subfamily A member 6E (MS4A6E) from Homo sapiens (Human).